The chain runs to 80 residues: Exodeoxyribonuclease 7 small subunit (80 aa).

The protein belongs to the XseB family. In terms of assembly, heterooligomer composed of large and small subunits.

The protein localises to the cytoplasm. The catalysed reaction is Exonucleolytic cleavage in either 5'- to 3'- or 3'- to 5'-direction to yield nucleoside 5'-phosphates.. Functionally, bidirectionally degrades single-stranded DNA into large acid-insoluble oligonucleotides, which are then degraded further into small acid-soluble oligonucleotides. This Vibrio cholerae serotype O1 (strain ATCC 39541 / Classical Ogawa 395 / O395) protein is Exodeoxyribonuclease 7 small subunit.